The primary structure comprises 64 residues: Large ribosomal subunit protein uL29 (64 aa).

The protein belongs to the universal ribosomal protein uL29 family.

This is Large ribosomal subunit protein uL29 from Acaryochloris marina (strain MBIC 11017).